Reading from the N-terminus, the 202-residue chain is IMP cyclohydrolase (202 aa).

The protein belongs to the archaeal IMP cyclohydrolase family.

It catalyses the reaction IMP + H2O = 5-formamido-1-(5-phospho-D-ribosyl)imidazole-4-carboxamide. It functions in the pathway purine metabolism; IMP biosynthesis via de novo pathway; IMP from 5-formamido-1-(5-phospho-D-ribosyl)imidazole-4-carboxamide: step 1/1. Functionally, catalyzes the cyclization of 5-formylamidoimidazole-4-carboxamide ribonucleotide to IMP. This Methanosphaera stadtmanae (strain ATCC 43021 / DSM 3091 / JCM 11832 / MCB-3) protein is IMP cyclohydrolase.